The following is a 256-amino-acid chain: Thiazole synthase (256 aa).

Residue Lys-97 is the Schiff-base intermediate with DXP of the active site. 1-deoxy-D-xylulose 5-phosphate-binding positions include Gly-158, 184–185, and 206–207; these read AG and NT.

The protein belongs to the ThiG family. In terms of assembly, homotetramer. Forms heterodimers with either ThiH or ThiS.

The protein localises to the cytoplasm. It catalyses the reaction [ThiS sulfur-carrier protein]-C-terminal-Gly-aminoethanethioate + 2-iminoacetate + 1-deoxy-D-xylulose 5-phosphate = [ThiS sulfur-carrier protein]-C-terminal Gly-Gly + 2-[(2R,5Z)-2-carboxy-4-methylthiazol-5(2H)-ylidene]ethyl phosphate + 2 H2O + H(+). It participates in cofactor biosynthesis; thiamine diphosphate biosynthesis. Functionally, catalyzes the rearrangement of 1-deoxy-D-xylulose 5-phosphate (DXP) to produce the thiazole phosphate moiety of thiamine. Sulfur is provided by the thiocarboxylate moiety of the carrier protein ThiS. In vitro, sulfur can be provided by H(2)S. This Pelotomaculum thermopropionicum (strain DSM 13744 / JCM 10971 / SI) protein is Thiazole synthase.